A 297-amino-acid chain; its full sequence is MSNTSISGSAVALVTPFRQDTSIDTDALRRLVQFHLASGTDILIPCGTTGESPTLCQEEQAAIIRIVKEEAGNHILVAAGAGTNDTRKAVELALNARKAGAEAILSVAPYYNKPSQEGFYQHYRHIAEALDIPVIIYNVPGRTGSNIAAETILRLASDFQNIAAVKEASDNIGQIMELLADRPDHFSVLTGEDTLILPFMAMGGDGVISVAANQVPAEIKQLITLVQEGNLPEARRLNNRLRKLFRLNFIESNPVPVKYALSLMGMIEEVYRLPLLAMEEKHKKILKQELETLGLIS.

Threonine 49 serves as a coordination point for pyruvate. Tyrosine 137 serves as the catalytic Proton donor/acceptor. Lysine 166 serves as the catalytic Schiff-base intermediate with substrate. Isoleucine 208 is a pyruvate binding site.

The protein belongs to the DapA family. Homotetramer; dimer of dimers.

It is found in the cytoplasm. The enzyme catalyses L-aspartate 4-semialdehyde + pyruvate = (2S,4S)-4-hydroxy-2,3,4,5-tetrahydrodipicolinate + H2O + H(+). It participates in amino-acid biosynthesis; L-lysine biosynthesis via DAP pathway; (S)-tetrahydrodipicolinate from L-aspartate: step 3/4. Functionally, catalyzes the condensation of (S)-aspartate-beta-semialdehyde [(S)-ASA] and pyruvate to 4-hydroxy-tetrahydrodipicolinate (HTPA). The polypeptide is 4-hydroxy-tetrahydrodipicolinate synthase (Prosthecochloris aestuarii (strain DSM 271 / SK 413)).